Consider the following 501-residue polypeptide: TGF-beta receptor type-1 (501 aa).

The N-terminal stretch at M1–A29 is a signal peptide. Topologically, residues L30–L124 are extracellular. 5 cysteine pairs are disulfide-bonded: C32/C50, C34/C37, C44/C67, C82/C94, and C95/C100. N41 carries N-linked (GlcNAc...) asparagine glycosylation. The helical transmembrane segment at A125–I145 threads the bilayer. The Cytoplasmic portion of the chain corresponds to C146–M501. S163 is subject to Phosphoserine. Residues T173–T202 form the GS domain. T183 and T184 each carry phosphothreonine; by TGFBR2. Phosphoserine; by TGFBR2 is present on residues S185, S187, and S189. The short motif at L191–P192 is the FKBP1A-binding element. Positions I203 to L493 constitute a Protein kinase domain. Residues I209 to V217 and K230 contribute to the ATP site. The active-site Proton acceptor is the D331. A Glycyl lysine isopeptide (Lys-Gly) (interchain with G-Cter in SUMO) cross-link involves residue K389.

This sequence belongs to the protein kinase superfamily. TKL Ser/Thr protein kinase family. TGFB receptor subfamily. As to quaternary structure, homodimer; in the endoplasmic reticulum but also at the cell membrane. Heterohexamer; TGFB1, TGFB2 and TGFB3 homodimeric ligands assemble a functional receptor composed of two TGFBR1 and TGFBR2 heterodimers to form a ligand-receptor heterohexamer. The respective affinity of TGBRB1 and TGFBR2 for the ligands may modulate the kinetics of assembly of the receptor and may explain the different biological activities of TGFB1, TGFB2 and TGFB3. Component of a complex composed of TSC22D1 (via N-terminus), TGFBR1 and TGFBR2; the interaction between TSC22D1 and TGFBR1 is inhibited by SMAD7 and promoted by TGFB1. Interacts with CD109; inhibits TGF-beta receptor activation in keratinocytes. Interacts with RBPMS. Interacts with SMAD2, SMAD3 and ZFYVE9; ZFYVE9 recruits SMAD2 and SMAD3 to the TGF-beta receptor. Interacts with TRAF6 and MAP3K7; induces MAP3K7 activation by TRAF6. Interacts with PARD6A; involved in TGF-beta induced epithelial to mesenchymal transition. Interacts with NEDD4L. Interacts with SMAD7, SMURF1 and SMURF2; SMAD7 recruits NEDD4L, SMURF1 and SMURF2 to the TGF-beta receptor. Interacts with USP15 and VPS39. Interacts (unphosphorylated) with FKBP1A; prevents TGFBR1 phosphorylation by TGFBR2 and stabilizes it in the inactive conformation. Interacts with SDCBP (via C-terminus). Interacts with CAV1 and this interaction is impaired in the presence of SDCBP. Interacts with APPL1; interaction is TGF beta dependent; mediates trafficking of the TGFBR1 from the endosomes to the nucleus via microtubules in a TRAF6-dependent manner. Interacts with GPR50; this interaction promotes the constitutive activation of SMAD signaling pathway. Requires Mg(2+) as cofactor. Mn(2+) is required as a cofactor. Phosphorylated at basal levels in the absence of ligand. Activated upon phosphorylation by TGFBR2, mainly in the GS domain. Phosphorylation in the GS domain abrogates FKBP1A-binding. In terms of processing, N-Glycosylated. Post-translationally, ubiquitinated; undergoes ubiquitination catalyzed by several E3 ubiquitin ligases including SMURF1, SMURF2 and NEDD4L2. Results in the proteasomal and/or lysosomal degradation of the receptor thereby negatively regulating its activity. Deubiquitinated by USP15, leading to stabilization of the protein and enhanced TGF-beta signal. Its ubiquitination and proteasome-mediated degradation is negatively regulated by SDCBP. As to expression, urogenital ridge, testis, ovary, brain and lungs.

The protein localises to the cell membrane. It is found in the cell junction. The protein resides in the tight junction. Its subcellular location is the membrane raft. It localises to the cell surface. The catalysed reaction is L-threonyl-[receptor-protein] + ATP = O-phospho-L-threonyl-[receptor-protein] + ADP + H(+). The enzyme catalyses L-seryl-[receptor-protein] + ATP = O-phospho-L-seryl-[receptor-protein] + ADP + H(+). Kept in an inactive conformation by FKBP1A preventing receptor activation in absence of ligand. CD109 is another inhibitor of the receptor. Transmembrane serine/threonine kinase forming with the TGF-beta type II serine/threonine kinase receptor, TGFBR2, the non-promiscuous receptor for the TGF-beta cytokines TGFB1, TGFB2 and TGFB3. Transduces the TGFB1, TGFB2 and TGFB3 signal from the cell surface to the cytoplasm and is thus regulating a plethora of physiological and pathological processes including cell cycle arrest in epithelial and hematopoietic cells, control of mesenchymal cell proliferation and differentiation, wound healing, extracellular matrix production, immunosuppression and carcinogenesis. The formation of the receptor complex composed of 2 TGFBR1 and 2 TGFBR2 molecules symmetrically bound to the cytokine dimer results in the phosphorylation and the activation of TGFBR1 by the constitutively active TGFBR2. Activated TGFBR1 phosphorylates SMAD2 which dissociates from the receptor and interacts with SMAD4. The SMAD2-SMAD4 complex is subsequently translocated to the nucleus where it modulates the transcription of the TGF-beta-regulated genes. This constitutes the canonical SMAD-dependent TGF-beta signaling cascade. Also involved in non-canonical, SMAD-independent TGF-beta signaling pathways. For instance, TGFBR1 induces TRAF6 autoubiquitination which in turn results in MAP3K7 ubiquitination and activation to trigger apoptosis. Also regulates epithelial to mesenchymal transition through a SMAD-independent signaling pathway through PARD6A phosphorylation and activation. In Rattus norvegicus (Rat), this protein is TGF-beta receptor type-1 (Tgfbr1).